Here is a 102-residue protein sequence, read N- to C-terminus: Small ribosomal subunit protein bS20 (102 aa).

Belongs to the bacterial ribosomal protein bS20 family.

Its function is as follows. Binds directly to 16S ribosomal RNA. This Synechococcus sp. (strain WH7803) protein is Small ribosomal subunit protein bS20.